The chain runs to 151 residues: Minor capsid protein P12 (151 aa).

Hydrophobic regions lie at residues 23–43 and 46–66; these read FIFF…YTIY and VQNT…IWNF. The cysteines at positions 112 and 120 are disulfide-linked.

As to quaternary structure, interacts with the major capsid protein.

Its subcellular location is the virion. In terms of biological role, one of the minor capsid proteins that constitute a network internal to the major capsid proteins and outside the lipid membrane. The minor capsid protein P12 does not serve a cross-linking function between neighboring capsomers, it may play a role in the viral capsid assembly. The sequence is that of Minor capsid protein P12 from Paramecium bursaria Chlorella virus 1 (PBCV-1).